The chain runs to 215 residues: Probable GTP-binding protein EngB (215 aa).

The EngB-type G domain maps to 31 to 215 (GPPEIAFAGR…RAAILQAIAV (185 aa)). GTP contacts are provided by residues 39–46 (GRSNVGKS), 66–70 (GRTQE), 93–96 (DMPG), 160–163 (TKSD), and 194–196 (TSS). Residues serine 46 and threonine 68 each contribute to the Mg(2+) site.

Belongs to the TRAFAC class TrmE-Era-EngA-EngB-Septin-like GTPase superfamily. EngB GTPase family. Mg(2+) serves as cofactor.

Its function is as follows. Necessary for normal cell division and for the maintenance of normal septation. The polypeptide is Probable GTP-binding protein EngB (Bartonella quintana (strain Toulouse) (Rochalimaea quintana)).